The chain runs to 401 residues: Voltage-gated potassium channel subunit beta-1 (401 aa).

Positions 90, 91, 97, and 119 each coordinate NADP(+). Tyrosine 124 acts as the Proton donor/acceptor in catalysis. The NADP(+) site is built by asparagine 192, serine 222, arginine 223, glutamine 248, tryptophan 277, serine 278, proline 279, leucine 280, alanine 281, cysteine 282, lysine 288, arginine 298, glycine 357, serine 359, glutamine 363, glutamate 366, and asparagine 367.

It belongs to the shaker potassium channel beta subunit family. As to quaternary structure, homotetramer. Interaction with tetrameric potassium channel alpha subunits gives rise to a heterooctamer. Identified in potassium channel complexes containing KCNA1, KCNA2, KCNA4, KCNA5, KCNA6, KCNAB1 and KCNAB2. Part of a complex containing KCNA1, KCNA4 and LGI1; interaction with LGI1 inhibits down-regulation of KCNA1 channel activity. Interacts with the dimer formed by GNB1 and GNG2; this enhances KCNA1 binding. Interacts with SQSTM1.

It is found in the cytoplasm. The protein localises to the membrane. The protein resides in the cell membrane. It catalyses the reaction a primary alcohol + NADP(+) = an aldehyde + NADPH + H(+). The enzyme catalyses a secondary alcohol + NADP(+) = a ketone + NADPH + H(+). Regulatory subunit of the voltage-gated potassium (Kv) channels composed of pore-forming and potassium-conducting alpha subunits and of regulatory beta subunits. The beta-1/KCNAB1 cytoplasmic subunit mediates closure of delayed rectifier potassium channels by physically obstructing the pore via its N-terminal domain and increases the speed of channel closure for other family members. Promotes the inactivation of KCNA1, KCNA2, KCNA4, KCNA5 and KCNA6 alpha subunit-containing channels. Displays nicotinamide adenine dinucleotide phosphate (NADPH)-dependent aldoketoreductase activity by catalyzing the NADPH-dependent reduction of a variety of endogenous aldehydes and ketones. The binding of NADPH is required for efficient down-regulation of potassium channel activity. Oxidation of the bound NADPH restrains N-terminal domain from blocking the channel, thereby decreasing N-type inactivation of potassium channel activity. This Bos taurus (Bovine) protein is Voltage-gated potassium channel subunit beta-1 (KCNAB1).